The primary structure comprises 944 residues: Tyrosine-protein kinase transmembrane receptor ROR2 (944 aa).

A signal peptide spans 1–33; it reads MARGWVRPSRVPLCARAVWTAAALLLWTPWTAG. At 34 to 403 the chain is on the extracellular side; that stretch reads EVEDSEAIDT…CSPRDGSKMG (370 aa). One can recognise an Ig-like C2-type domain in the interval 55–145; that stretch reads PTLKGYFLNF…VATNGLKTIT (91 aa). Residue asparagine 70 is glycosylated (N-linked (GlcNAc...) asparagine). Intrachain disulfides connect cysteine 83–cysteine 135, cysteine 174–cysteine 239, cysteine 182–cysteine 232, cysteine 223–cysteine 264, cysteine 252–cysteine 300, cysteine 256–cysteine 286, cysteine 316–cysteine 394, cysteine 337–cysteine 377, and cysteine 365–cysteine 389. The FZ domain maps to 169–303; sequence QEDGFCQPYR…SPDAANCMRI (135 aa). Residue asparagine 188 is glycosylated (N-linked (GlcNAc...) asparagine). The Kringle domain maps to 316–394; the sequence is CYNGSGADYR…RVELCDVPPC (79 aa). Asparagine 318 carries an N-linked (GlcNAc...) asparagine glycan. A helical membrane pass occupies residues 404 to 424; it reads ILYILVPSIAIPLVIACLFFL. Residues 425–944 lie on the Cytoplasmic side of the membrane; that stretch reads VCMCRNKQKA…TEAAHVQLEA (520 aa). One can recognise a Protein kinase domain in the interval 473-746; the sequence is VRFMEELGED…PRFKDIHSRL (274 aa). ATP-binding positions include 479 to 487 and lysine 507; that span reads LGEDRFGKV. Aspartate 615 (proton acceptor) is an active-site residue. The residue at position 646 (tyrosine 646) is a Phosphotyrosine; by autocatalysis. The disordered stretch occupies residues 757 to 779; that stretch reads SSAQTSGASNTTQTSSLSTSPVS. Low complexity predominate over residues 765-779; sequence SNTTQTSSLSTSPVS. An Asymmetric dimethylarginine modification is found at arginine 785. Disordered regions lie at residues 850-879 and 898-929; these read QVPPQMVPKPSSHHSGSGSTSTGYVTTAPS and QNIAEDVAQSPVQEAEEEEEGSVPETELLGDN. A compositionally biased stretch (low complexity) spans 857–872; it reads PKPSSHHSGSGSTSTG.

This sequence belongs to the protein kinase superfamily. Tyr protein kinase family. ROR subfamily. Homodimer; promotes osteogenesis. Binds YWHAB. Interacts with WTIP. Interacts with ROR2. The cofactor is Mg(2+).

It localises to the cell membrane. It carries out the reaction L-tyrosyl-[protein] + ATP = O-phospho-L-tyrosyl-[protein] + ADP + H(+). Functionally, tyrosine-protein kinase receptor which may be involved in the early formation of the chondrocytes. It seems to be required for cartilage and growth plate development. Phosphorylates YWHAB, leading to induction of osteogenesis and bone formation. In contrast, has also been shown to have very little tyrosine kinase activity in vitro. May act as a receptor for wnt ligand WNT5A which may result in the inhibition of WNT3A-mediated signaling. This is Tyrosine-protein kinase transmembrane receptor ROR2 (Ror2) from Mus musculus (Mouse).